We begin with the raw amino-acid sequence, 254 residues long: Probable phosphoglycerate mutase 4 (254 aa).

Residues 10–17 (RHGESTWN) and 23–24 (SC) each bind substrate. The Tele-phosphohistidine intermediate role is filled by His11. Phosphoserine is present on residues Ser14 and Ser23. The residue at position 26 (Tyr26) is a Phosphotyrosine. The residue at position 31 (Ser31) is a Phosphoserine. Substrate contacts are provided by residues Arg62, 89–92 (ERHY), and Lys100. Residue Glu89 is the Proton donor/acceptor of the active site. Lys106 carries the N6-acetyllysine modification. Residue 116-117 (RR) participates in substrate binding. Position 118 is a phosphoserine (Ser118). 187 to 188 (GN) contributes to the substrate binding site. At Lys251 the chain carries N6-acetyllysine; alternate. Lys251 carries the post-translational modification N6-succinyllysine; alternate. 2 positions are modified to N6-acetyllysine: Lys253 and Lys254.

It belongs to the phosphoglycerate mutase family. BPG-dependent PGAM subfamily.

The catalysed reaction is (2R)-2-phosphoglycerate = (2R)-3-phosphoglycerate. The enzyme catalyses (2R)-3-phospho-glyceroyl phosphate = (2R)-2,3-bisphosphoglycerate + H(+). This Pan troglodytes (Chimpanzee) protein is Probable phosphoglycerate mutase 4 (PGAM4).